Reading from the N-terminus, the 156-residue chain is Arginine repressor (156 aa).

It belongs to the ArgR family.

It localises to the cytoplasm. It participates in amino-acid biosynthesis; L-arginine biosynthesis [regulation]. Functionally, regulates arginine biosynthesis genes. The chain is Arginine repressor from Vibrio campbellii (strain ATCC BAA-1116).